The chain runs to 221 residues: NAD(P)H-hydrate epimerase (221 aa).

In terms of domain architecture, YjeF N-terminal spans 10 to 211; it reads MQQYDQYTIN…DIGIYSPAEL (202 aa). 58–62 serves as a coordination point for (6S)-NADPHX; the sequence is NNGGD. Positions 59 and 121 each coordinate K(+). (6S)-NADPHX-binding positions include 125-131 and aspartate 154; that span reads GIGLSKP. Residue serine 157 coordinates K(+).

This sequence belongs to the NnrE/AIBP family. Requires K(+) as cofactor.

The enzyme catalyses (6R)-NADHX = (6S)-NADHX. It carries out the reaction (6R)-NADPHX = (6S)-NADPHX. In terms of biological role, catalyzes the epimerization of the S- and R-forms of NAD(P)HX, a damaged form of NAD(P)H that is a result of enzymatic or heat-dependent hydration. This is a prerequisite for the S-specific NAD(P)H-hydrate dehydratase to allow the repair of both epimers of NAD(P)HX. The protein is NAD(P)H-hydrate epimerase of Weissella koreensis (strain KACC 15510).